The chain runs to 276 residues: Shikimate dehydrogenase (NADP(+)) (276 aa).

Residues 15 to 17 (SKS) and T62 contribute to the shikimate site. K66 functions as the Proton acceptor in the catalytic mechanism. E78 contributes to the NADP(+) binding site. N87 and D103 together coordinate shikimate. NADP(+) is bound by residues 128–132 (GAGGA) and I217. Residue Y219 participates in shikimate binding. G240 is an NADP(+) binding site.

Belongs to the shikimate dehydrogenase family. Homodimer.

The enzyme catalyses shikimate + NADP(+) = 3-dehydroshikimate + NADPH + H(+). It participates in metabolic intermediate biosynthesis; chorismate biosynthesis; chorismate from D-erythrose 4-phosphate and phosphoenolpyruvate: step 4/7. In terms of biological role, involved in the biosynthesis of the chorismate, which leads to the biosynthesis of aromatic amino acids. Catalyzes the reversible NADPH linked reduction of 3-dehydroshikimate (DHSA) to yield shikimate (SA). The chain is Shikimate dehydrogenase (NADP(+)) from Lysinibacillus sphaericus (strain C3-41).